Consider the following 159-residue polypeptide: 3-dehydroquinate dehydratase (159 aa).

Y22 functions as the Proton acceptor in the catalytic mechanism. Residues N73, H79, and D86 each contribute to the substrate site. H99 functions as the Proton donor in the catalytic mechanism. Substrate is bound by residues 100 to 101 and R110; that span reads IS.

Belongs to the type-II 3-dehydroquinase family. In terms of assembly, homododecamer.

The catalysed reaction is 3-dehydroquinate = 3-dehydroshikimate + H2O. The protein operates within metabolic intermediate biosynthesis; chorismate biosynthesis; chorismate from D-erythrose 4-phosphate and phosphoenolpyruvate: step 3/7. Functionally, catalyzes a trans-dehydration via an enolate intermediate. The protein is 3-dehydroquinate dehydratase of Campylobacter jejuni subsp. doylei (strain ATCC BAA-1458 / RM4099 / 269.97).